A 296-amino-acid polypeptide reads, in one-letter code: 33 kDa chaperonin (296 aa).

2 cysteine pairs are disulfide-bonded: Cys238/Cys240 and Cys271/Cys274.

The protein belongs to the HSP33 family. Under oxidizing conditions two disulfide bonds are formed involving the reactive cysteines. Under reducing conditions zinc is bound to the reactive cysteines and the protein is inactive.

Its subcellular location is the cytoplasm. In terms of biological role, redox regulated molecular chaperone. Protects both thermally unfolding and oxidatively damaged proteins from irreversible aggregation. Plays an important role in the bacterial defense system toward oxidative stress. This Clostridium botulinum (strain ATCC 19397 / Type A) protein is 33 kDa chaperonin.